The chain runs to 348 residues: Lipoyl synthase (348 aa).

7 residues coordinate [4Fe-4S] cluster: Cys-55, Cys-60, Cys-66, Cys-81, Cys-85, Cys-88, and Ser-292. A Radical SAM core domain is found at 67-281 (WESREATFLI…SDEAYEIGFA (215 aa)).

The protein belongs to the radical SAM superfamily. Lipoyl synthase family. Requires [4Fe-4S] cluster as cofactor.

The protein resides in the cytoplasm. It carries out the reaction [[Fe-S] cluster scaffold protein carrying a second [4Fe-4S](2+) cluster] + N(6)-octanoyl-L-lysyl-[protein] + 2 oxidized [2Fe-2S]-[ferredoxin] + 2 S-adenosyl-L-methionine + 4 H(+) = [[Fe-S] cluster scaffold protein] + N(6)-[(R)-dihydrolipoyl]-L-lysyl-[protein] + 4 Fe(3+) + 2 hydrogen sulfide + 2 5'-deoxyadenosine + 2 L-methionine + 2 reduced [2Fe-2S]-[ferredoxin]. It functions in the pathway protein modification; protein lipoylation via endogenous pathway; protein N(6)-(lipoyl)lysine from octanoyl-[acyl-carrier-protein]: step 2/2. Catalyzes the radical-mediated insertion of two sulfur atoms into the C-6 and C-8 positions of the octanoyl moiety bound to the lipoyl domains of lipoate-dependent enzymes, thereby converting the octanoylated domains into lipoylated derivatives. The polypeptide is Lipoyl synthase (Corynebacterium efficiens (strain DSM 44549 / YS-314 / AJ 12310 / JCM 11189 / NBRC 100395)).